The sequence spans 25 residues: Antimicrobial peptide scolopin-2 (25 aa).

In terms of tissue distribution, expressed by the venom gland.

Its subcellular location is the secreted. Antimicrobial peptide against both Gram-positive, -negative and yeast. Also induces histamine release by mast cells and shows moderate hemolytic activities against both human and rabbit red cells. This chain is Antimicrobial peptide scolopin-2, found in Scolopendra mutilans (Chinese red-headed centipede).